The chain runs to 222 residues: Small ribosomal subunit protein uS3 (222 aa).

The KH type-2 domain occupies Ile-38–Lys-106.

This sequence belongs to the universal ribosomal protein uS3 family. In terms of assembly, part of the 30S ribosomal subunit. Forms a tight complex with proteins S10 and S14.

Binds the lower part of the 30S subunit head. Binds mRNA in the 70S ribosome, positioning it for translation. This is Small ribosomal subunit protein uS3 from Lactobacillus gasseri (strain ATCC 33323 / DSM 20243 / BCRC 14619 / CIP 102991 / JCM 1131 / KCTC 3163 / NCIMB 11718 / NCTC 13722 / AM63).